Consider the following 127-residue polypeptide: Large ribosomal subunit protein bL12 (127 aa).

An N6-methyllysine mark is found at Lys77 and Lys88.

Belongs to the bacterial ribosomal protein bL12 family. As to quaternary structure, homodimer. Part of the ribosomal stalk of the 50S ribosomal subunit. Forms a multimeric L10(L12)X complex, where L10 forms an elongated spine to which 2 to 4 L12 dimers bind in a sequential fashion. Binds GTP-bound translation factors.

Its function is as follows. Forms part of the ribosomal stalk which helps the ribosome interact with GTP-bound translation factors. Is thus essential for accurate translation. This chain is Large ribosomal subunit protein bL12, found in Nitratidesulfovibrio vulgaris (strain DSM 19637 / Miyazaki F) (Desulfovibrio vulgaris).